A 201-amino-acid polypeptide reads, in one-letter code: Small ribosomal subunit protein uS4c (201 aa).

A disordered region spans residues 15-45 (LGDLPGLSRKAIKRSYPPGEHGQKSRKPSEY). Residues 35–45 (HGQKSRKPSEY) are compositionally biased toward basic and acidic residues. Positions 90-153 (MRLDNTVFRL…ASRKLVENYL (64 aa)) constitute an S4 RNA-binding domain.

Belongs to the universal ribosomal protein uS4 family. Part of the 30S ribosomal subunit. Contacts protein S5. The interaction surface between S4 and S5 is involved in control of translational fidelity.

Its subcellular location is the plastid. It localises to the chloroplast. In terms of biological role, one of the primary rRNA binding proteins, it binds directly to 16S rRNA where it nucleates assembly of the body of the 30S subunit. Functionally, with S5 and S12 plays an important role in translational accuracy. This Pyropia yezoensis (Susabi-nori) protein is Small ribosomal subunit protein uS4c (rps4).